Consider the following 499-residue polypeptide: L-arabinose isomerase (499 aa).

Residues Glu306, Glu333, His350, and His449 each contribute to the Mn(2+) site.

Belongs to the arabinose isomerase family. Mn(2+) serves as cofactor.

The enzyme catalyses beta-L-arabinopyranose = L-ribulose. It participates in carbohydrate degradation; L-arabinose degradation via L-ribulose; D-xylulose 5-phosphate from L-arabinose (bacterial route): step 1/3. Catalyzes the conversion of L-arabinose to L-ribulose. In Tolumonas auensis (strain DSM 9187 / NBRC 110442 / TA 4), this protein is L-arabinose isomerase.